Reading from the N-terminus, the 451-residue chain is Kynureninase (451 aa).

Pyridoxal 5'-phosphate contacts are provided by residues Leu-131, Ser-132, 159–162 (FPSD), Ser-215, Asp-244, His-247, and Tyr-269. Residue Lys-270 is modified to N6-(pyridoxal phosphate)lysine. Pyridoxal 5'-phosphate is bound by residues Trp-303 and Asn-331.

This sequence belongs to the kynureninase family. In terms of assembly, homodimer. The cofactor is pyridoxal 5'-phosphate.

The protein resides in the cytoplasm. The catalysed reaction is L-kynurenine + H2O = anthranilate + L-alanine + H(+). It catalyses the reaction 3-hydroxy-L-kynurenine + H2O = 3-hydroxyanthranilate + L-alanine + H(+). It participates in amino-acid degradation; L-kynurenine degradation; L-alanine and anthranilate from L-kynurenine: step 1/1. It functions in the pathway cofactor biosynthesis; NAD(+) biosynthesis; quinolinate from L-kynurenine: step 2/3. Catalyzes the cleavage of L-kynurenine (L-Kyn) and L-3-hydroxykynurenine (L-3OHKyn) into anthranilic acid (AA) and 3-hydroxyanthranilic acid (3-OHAA), respectively. The protein is Kynureninase of Dictyostelium discoideum (Social amoeba).